A 79-amino-acid chain; its full sequence is Sec-independent protein translocase protein TatA (79 aa).

A helical transmembrane segment spans residues 1-21 (MGGISIWQLLIIALIVILLFG). Positions 42–79 (AMTSETSEEEKKALEDSQTAQTSQQAEKKPESKDKEQA) are disordered. The segment covering 57–66 (DSQTAQTSQQ) has biased composition (polar residues). Basic and acidic residues predominate over residues 67 to 79 (AEKKPESKDKEQA).

Belongs to the TatA/E family. As to quaternary structure, the Tat system comprises two distinct complexes: a TatABC complex, containing multiple copies of TatA, TatB and TatC subunits, and a separate TatA complex, containing only TatA subunits. Substrates initially bind to the TatABC complex, which probably triggers association of the separate TatA complex to form the active translocon.

Its subcellular location is the cell inner membrane. Functionally, part of the twin-arginine translocation (Tat) system that transports large folded proteins containing a characteristic twin-arginine motif in their signal peptide across membranes. TatA could form the protein-conducting channel of the Tat system. This is Sec-independent protein translocase protein TatA from Shewanella denitrificans (strain OS217 / ATCC BAA-1090 / DSM 15013).